The chain runs to 488 residues: MSQSVESRTRIKNERYESGVIPYAKMGYWDADYQIKDTDVLAMFRMTPQKGVDPVECAAAIAGESSTATWTVVWTDLLTACDLYRAKAYRVDPVPGAADQYFAYIAYELDLFEEGSLANLTASIIGNVFGFKAVNALRLEDMRMPVAYLKTFQGPATGVIVERERLDKYGRPLLGATVKPKLGLSGKNYGRVVYEGLKGGLDFLKDDENINSQPFMRWKERFLFGMEGVNRAAAGTGEIKGHYFNITAGTMEDMYERAEFCKEIGTVICMIDLVIGYTAIQSMGIWARKNSMILHLHRAGNSTYSRQKTHGMNFRVICKWMRMAGVDHIHAGTVVGKLEGDPLMVKGFYDTLLEVKTEVNLVEGLFFAQDWASLAKCMPVASGGIHCGQMHQLINYLGDDVVLQFGGGTIGHPDGIQSGATANRVALECMVIARNEGRDYVNEGPDILRTAAKSCGPLQSALDLWKDITFNYASTDTADFVETATANR.

Substrate-binding residues include Asn-127 and Thr-177. The active-site Proton acceptor is the Lys-179. Lys-181 is a binding site for substrate. Mg(2+) is bound by residues Lys-205, Asp-207, and Glu-208. Residue Lys-205 is modified to N6-carboxylysine. His-297 functions as the Proton acceptor in the catalytic mechanism. Substrate contacts are provided by Arg-298, His-330, and Ser-382.

This sequence belongs to the RuBisCO large chain family. Type I subfamily. As to quaternary structure, heterohexadecamer of 8 large chains and 8 small chains. It depends on Mg(2+) as a cofactor.

It localises to the plastid. The protein resides in the chloroplast. It carries out the reaction 2 (2R)-3-phosphoglycerate + 2 H(+) = D-ribulose 1,5-bisphosphate + CO2 + H2O. The enzyme catalyses D-ribulose 1,5-bisphosphate + O2 = 2-phosphoglycolate + (2R)-3-phosphoglycerate + 2 H(+). RuBisCO catalyzes two reactions: the carboxylation of D-ribulose 1,5-bisphosphate, the primary event in carbon dioxide fixation, as well as the oxidative fragmentation of the pentose substrate in the photorespiration process. Both reactions occur simultaneously and in competition at the same active site. The polypeptide is Ribulose bisphosphate carboxylase large chain (Rhodomonas salina (Cryptomonas salina)).